The sequence spans 380 residues: Spore coat protein B (380 aa).

The segment at 224–364 (GPKGSYKKED…SSGKQKEDYS (141 aa)) is disordered. Residues 229 to 248 (YKKEDQKNEQNQEDNNDKDS) show a composition bias toward basic and acidic residues. Composition is skewed to low complexity over residues 275–288 (SKSG…SSSK), 296–315 (SSDY…SSSK), and 338–356 (SSDY…IKSS).

This chain is Spore coat protein B (cotB), found in Bacillus subtilis (strain 168).